The chain runs to 201 residues: Peptide deformylase (201 aa).

2 residues coordinate Fe cation: Cys121 and His163. Residue Glu164 is part of the active site. His167 lines the Fe cation pocket.

It belongs to the polypeptide deformylase family. Fe(2+) is required as a cofactor.

It carries out the reaction N-terminal N-formyl-L-methionyl-[peptide] + H2O = N-terminal L-methionyl-[peptide] + formate. Functionally, removes the formyl group from the N-terminal Met of newly synthesized proteins. Requires at least a dipeptide for an efficient rate of reaction. N-terminal L-methionine is a prerequisite for activity but the enzyme has broad specificity at other positions. The polypeptide is Peptide deformylase (Synechococcus sp. (strain CC9605)).